Consider the following 282-residue polypeptide: Complement component 1 Q subcomponent-binding protein, mitochondrial (282 aa).

The N-terminal 70 residues, 1-70 (MLPLLRCVPR…PRGPCACGCG (70 aa)), are a transit peptide targeting the mitochondrion. The interval 76-93 (TEGDKAFVDFLNDEIKEE) is C1q binding. The residue at position 91 (K91) is an N6-acetyllysine. Residues 137–163 (NSIPPTFDGEEEPTQGQKVEEQEPELT) form a disordered region. Residues 168-213 (FVVEVIKNDDGKKALVLDCHYPEDEVGQEDEAESDIFSIREVSFQS) are interaction with MAVS. Position 188 is a phosphotyrosine (Y188). Residues S201 and S205 each carry the phosphoserine modification.

This sequence belongs to the MAM33 family. Homotrimer; three monomers form a donut-shaped structure with an unusually asymmetric charge distribution on the surface. Interacts with CDK13, HRK, VTN, NFYB, ADRA1B, FOXC1, DDX21, DDX50, NCL, SRSF1 and SRSF9. Interacts with CD93; the association may represent a cell surface C1q receptor. Interacts with KRT1; the association represents a cell surface kininogen receptor. Interacts with CD209; the interaction is indicative for a C1q:C1QBP:CD209 signaling complex. Interacts with FBL and RRP1; the respective interactions with C1QBP are competitive. Probably associates with the mitoribosome. Interacts with MAVS; the interaction occurs upon viral transfection. Interacts with PPIF. Interacts with U2AF1L4. Interacts with PLEKHN1. Interacts with VGF-derived peptide TLQP-21. Interacts with MRE11 and RAD50; forming the MRC (MRE11-RAD50-C1QBP) complex that inhibits the activity of MRE11. In terms of assembly, (Microbial infection) Interacts with Rubella virus capsid protein; the interaction occurs in mitochondria. As to quaternary structure, (Microbial infection) Interacts with L.monocytogenes InlB.

The protein resides in the mitochondrion matrix. It is found in the nucleus. It localises to the cell membrane. The protein localises to the secreted. Its subcellular location is the cytoplasm. The protein resides in the nucleolus. Multifunctional and multicompartmental protein involved in inflammation and infection processes, ribosome biogenesis, protein synthesis in mitochondria, regulation of apoptosis, transcriptional regulation and pre-mRNA splicing. At the cell surface is thought to act as an endothelial receptor for plasma proteins of the complement and kallikrein-kinin cascades. Putative receptor for C1q; specifically binds to the globular 'heads' of C1q thus inhibiting C1; may perform the receptor function through a complex with C1qR/CD93. In complex with cytokeratin-1/KRT1 is a high affinity receptor for kininogen-1/HMWK. Can also bind other plasma proteins, such as coagulation factor XII leading to its autoactivation. May function to bind initially fluid kininogen-1 to the cell membrane. The secreted form may enhance both extrinsic and intrinsic coagulation pathways. It is postulated that the cell surface form requires docking with transmembrane proteins for downstream signaling which might be specific for a cell-type or response. By acting as C1q receptor is involved in chemotaxis of immature dendritic cells and neutrophils and is proposed to signal through CD209/DC-SIGN on immature dendritic cells, through integrin alpha-4/beta-1 during trophoblast invasion of the decidua, and through integrin beta-1 during endothelial cell adhesion and spreading. Signaling involved in inhibition of innate immune response is implicating the PI3K-AKT/PKB pathway. Required for protein synthesis in mitochondria. In mitochondrial translation may be involved in formation of functional 55S mitoribosomes; the function seems to involve its RNA-binding activity. Acts as a RNA modification reader, which specifically recognizes and binds mitochondrial RNAs modified by C5-methylcytosine (m5C) in response to stress, and promotes recruitment of the mitochondrial degradosome complex, leading to their degradation. May be involved in the nucleolar ribosome maturation process; the function may involve the exchange of FBL for RRP1 in the association with pre-ribosome particles. Involved in regulation of RNA splicing by inhibiting the RNA-binding capacity of SRSF1 and its phosphorylation. Is required for the nuclear translocation of splicing factor U2AF1L4. Involved in regulation of CDKN2A- and HRK-mediated apoptosis. Stabilizes mitochondrial CDKN2A isoform smARF. May be involved in regulation of FOXC1 transcriptional activity and NFY/CCAAT-binding factor complex-mediated transcription. May play a role in antibacterial defense as it can bind to cell surface hyaluronan and inhibit Streptococcus pneumoniae hyaluronate lyase. May be involved in modulation of the immune response; ligation by HCV core protein is resulting in suppression of interleukin-12 production in monocyte-derived dendritic cells. Involved in regulation of antiviral response by inhibiting RIGI- and IFIH1-mediated signaling pathways probably involving its association with MAVS after viral infection. Acts as a regulator of DNA repair via homologous recombination by inhibiting the activity of MRE11: interacts with unphosphorylated MRE11 and RAD50 in absence of DNA damage, preventing formation and activity of the MRN complex. Following DNA damage, dissociates from phosphorylated MRE11, allowing formation of the MRN complex. Functionally, (Microbial infection) During bacterial infection processes acts as an attachment site for microbial proteins, including Listeria monocytogenes internalin B (InlB). This Chlorocebus aethiops (Green monkey) protein is Complement component 1 Q subcomponent-binding protein, mitochondrial (C1QBP).